The primary structure comprises 456 residues: Phospholipase A1 member A (456 aa).

The N-terminal stretch at 1 to 25 (MPPDFWERCFWLWGLLLWLSVGSTG) is a signal peptide. The N-linked (GlcNAc...) asparagine glycan is linked to asparagine 34. The Nucleophile role is filled by serine 166. Aspartate 190 functions as the Charge relay system in the catalytic mechanism. The cysteines at positions 245 and 258 are disulfide-linked. Histidine 260 functions as the Charge relay system in the catalytic mechanism. 2 disulfides stabilise this stretch: cysteine 282–cysteine 293 and cysteine 296–cysteine 304.

This sequence belongs to the AB hydrolase superfamily. Lipase family.

The protein localises to the secreted. It catalyses the reaction a 1,2-diacyl-sn-glycero-3-phospho-L-serine + H2O = a 2-acyl-sn-glycero-3-phospho-L-serine + a fatty acid + H(+). The catalysed reaction is 1,2-di-(9Z)-octadecenoyl-sn-glycero-3-phospho-L-serine + H2O = 2-(9Z-octadecenoyl)-sn-glycero-3-phospho-L-serine + (9Z)-octadecenoate + H(+). The enzyme catalyses 1-hexadecanoyl-2-(5Z,8Z,11Z,14Z-eicosatetraenoyl)-sn-glycero-3-phospho-L-serine + H2O = 2-(5Z,8Z,11Z,14Z)-eicosatetraenoyl-sn-glycero-3-phospho-L-serine + hexadecanoate + H(+). It carries out the reaction a 1-acyl-sn-glycero-3-phospho-L-serine + H2O = sn-glycero-3-phospho-L-serine + a fatty acid + H(+). It catalyses the reaction 1-(9Z-octadecenoyl)-sn-glycero-3-phospho-L-serine + H2O = sn-glycero-3-phospho-L-serine + (9Z)-octadecenoate + H(+). Its function is as follows. Hydrolyzes the ester bond of the acyl group attached at the sn-1 position of phosphatidylserines (phospholipase A1 activity) and 1-acyl-2-lysophosphatidylserines (lysophospholipase activity) in the pathway of phosphatidylserines acyl chain remodeling. Cleaves phosphatidylserines exposed on the outer leaflet of the plasma membrane of apoptotic cells producing 2-acyl-1-lysophosphatidylserines, which in turn enhance mast cell activation and histamine production. Has no activity toward other glycerophospholipids including phosphatidylcholines, phosphatidylethanolamines, phosphatidic acids or phosphatidylinositols, or glycerolipids such as triolein. This chain is Phospholipase A1 member A (PLA1A), found in Bos taurus (Bovine).